The primary structure comprises 620 residues: Sodium-dependent dopamine transporter (620 aa).

Topologically, residues 1 to 56 are cytoplasmic; that stretch reads MSKSKCSVGLMSSVVAPAKEPNAVGPKEVELILVKEQNGVQLTSSTLTNPRQSPVE. A discontinuously helical membrane pass occupies residues 57 to 95; the sequence is AQDRETWGKKIDFLLSVIGFAVDLANVWRFPYLCYKNGG. Gly-75, Ala-77, Val-78, Asp-79, and Asn-82 together coordinate Na(+). Asp-79 is a dopamine binding site. A run of 2 helical transmembrane segments spans residues 96-127 and 128-171; these read GAFL…NREG and AAGV…FSSF. Positions 149 and 153 each coordinate dopamine. Topologically, residues 172 to 236 are extracellular; it reads TTELPWIHCN…SHGIDDLGPP (65 aa). A disulfide bridge links Cys-180 with Cys-189. Asn-181, Asn-188, and Asn-205 each carry an N-linked (GlcNAc...) asparagine glycan. 2 helical membrane-spanning segments follow: residues 237-256 and 257-287; these read RWQL…FSLW and KGVK…GVTL. Topologically, residues 288–306 are extracellular; that stretch reads PGAIDGIRAYLSVDFYRLC. Residues 307–335 form a discontinuously helical membrane-spanning segment; that stretch reads EASVWIDAATQVCFSLGVGFGVLIAFSSY. Residue Gln-317 coordinates chloride. Phe-320 provides a ligand contact to dopamine. Ser-321 and Asn-353 together coordinate Na(+). Ser-321 is a chloride binding site. The chain crosses the membrane as a helical span at residues 336 to 376; the sequence is NKFTNNCYRDAIVTTSINSLTSFSSGFVVFSFLGYMAQKHS. Ser-357 is a binding site for chloride. Over 377-400 the chain is Extracellular; sequence VPIGDVAKDGPGLIFIIYPEAIAT. Helical transmembrane passes span 401–442, 443–466, and 467–499; these read LPLS…QLLH, RHRE…CVTN, and GGIY…AWFY. Positions 418, 421, and 422 each coordinate Na(+). Positions 422 and 423 each coordinate dopamine. The Cytoplasmic segment spans residues 500–516; sequence GVGQFSDDIQQMTGQRP. The helical transmembrane segment at 517 to 542 threads the bilayer; it reads SLYWRLCWKLVSPCFLLFVVVVSIVT. Residues 543 to 553 are Extracellular-facing; sequence FRPPHYGAYIF. A helical transmembrane segment spans residues 554 to 583; that stretch reads PDWANALGWVIATSSMAMVPIYAAYKFCSL. The segment at 561–590 is interaction with TGFB1I1; sequence GWVIATSSMAMVPIYAAYKFCSLPGSFREK. The Cytoplasmic segment spans residues 584-620; sequence PGSFREKLAYAIAPEKDRELVDRGEVRQFTLRHWLKV.

It belongs to the sodium:neurotransmitter symporter (SNF) (TC 2.A.22) family. SLC6A3 subfamily. As to quaternary structure, monomer. Homooligomer; disulfide-linked. Interacts with PRKCABP and TGFB1I1. Interacts (via N-terminus) with SYNGR3 (via N-terminus). Interacts with SLC18A2. Interacts with TOR1A (ATP-bound); TOR1A regulates SLC6A3 subcellular location. Interacts with alpha-synuclein/SNCA. Interacts with SEPTIN4. Highly expressed in substantia nigra. Expressed in axonal varicosities in dopaminergic nerve terminals (at protein level). Expressed in the striatum (at protein level).

The protein localises to the cell membrane. It is found in the cell projection. It localises to the neuron projection. The protein resides in the axon. The enzyme catalyses dopamine(out) + chloride(out) + Na(+)(out) = dopamine(in) + chloride(in) + Na(+)(in). It carries out the reaction dopamine(out) + chloride(out) + 2 Na(+)(out) = dopamine(in) + chloride(in) + 2 Na(+)(in). It catalyses the reaction (R)-noradrenaline(out) + chloride(out) + Na(+)(out) = (R)-noradrenaline(in) + chloride(in) + Na(+)(in). Its activity is regulated as follows. Inhibited by cocaine, which occupies the same binding site as dopamine. Inhibited by zinc ions. Enhanced by the antibiotic valinomycin. Inhibited by benztropine. Inhibited by GBR 12909 dihydrochloride and amphetamine. Inhibited by mazindol, GBR 12783 dihydrochloride, nomifensine, diclofensine, amfonelic acid, Lu 19005, Win-35428, bupropion and ritalin. Functionally, mediates sodium- and chloride-dependent transport of dopamine. Also mediates sodium- and chloride-dependent transport of norepinephrine (also known as noradrenaline). Regulator of light-dependent retinal hyaloid vessel regression, downstream of OPN5 signaling. In Homo sapiens (Human), this protein is Sodium-dependent dopamine transporter (SLC6A3).